The following is a 316-amino-acid chain: NADH-cytochrome b5 reductase-like (316 aa).

Residues 17 to 53 (KPVEPLPSQCCGSGCSPCVFDLYYRDLERWETARARN) form the Oxidoreductase-like domain. The FAD-binding FR-type domain occupies 76 to 178 (ETFLAFHIST…RGPFGSFLYE (103 aa)). Residues 158-173 (ESWR…GPFG) and 183-215 (GELL…TFVT) each bind FAD.

Belongs to the flavoprotein pyridine nucleotide cytochrome reductase family. FAD serves as cofactor.

The enzyme catalyses 2 Fe(III)-[cytochrome b5] + NADH = 2 Fe(II)-[cytochrome b5] + NAD(+) + H(+). NADH-cytochrome b5 reductases are involved in desaturation and elongation of fatty acids, cholesterol biosynthesis, drug metabolism, and, in erythrocyte, methemoglobin reduction. In Mus musculus (Mouse), this protein is NADH-cytochrome b5 reductase-like (Cyb5rl).